We begin with the raw amino-acid sequence, 276 residues long: MGVKKKLKLTSLLGLSLLIMTACATNGVTSDITAESADFWSKLVYFFAEIIRFLSFDISIGVGIILFTVLIRTVLLPVFQVQMVASRKMQEAQPRIKALREQYPGRDMESRTKLEQEMRKVFKEMGVRQSDSLWPILIQMPVILALFQALSRVDFLKTGHFLWINLGSVDTTLVLPILAAVFTFLSTWLSNKALSERNGATTAMMYGIPVLIFIFAVYAPGGVALYWTVSNAYQVLQTYFLNNPFKIIAEREAVVQAQKDLENRKRKAKKKAQKTK.

Positions 1-22 are cleaved as a signal peptide; it reads MGVKKKLKLTSLLGLSLLIMTA. A lipid anchor (N-palmitoyl cysteine) is attached at C23. C23 carries S-diacylglycerol cysteine lipidation. A run of 4 helical transmembrane segments spans residues 58–78, 130–150, 169–189, and 207–227; these read ISIG…LLPV, SDSL…FQAL, VDTT…STWL, and GIPV…ALYW.

It belongs to the OXA1/ALB3/YidC family. Type 2 subfamily. As to quaternary structure, interacts with KhpB (also called EloR/Jag).

The protein localises to the cell membrane. Its function is as follows. Required for the insertion and/or proper folding and/or complex formation of integral membrane proteins into the membrane. Involved in integration of membrane proteins that insert both dependently and independently of the Sec translocase complex, as well as at least some lipoproteins. This Streptococcus pneumoniae (strain ATCC BAA-255 / R6) protein is Membrane protein insertase YidC 2.